The sequence spans 78 residues: MSDTVERVKKIIVEHLGVNADKVVEDASFIDDLGADSLDTVELVMAFEEEFGVEIPDEAAETIFTVGDAVKFIDKASA.

Positions Ser-2 to Ser-77 constitute a Carrier domain. Ser-37 bears the O-(pantetheine 4'-phosphoryl)serine mark.

It belongs to the acyl carrier protein (ACP) family. In terms of processing, 4'-phosphopantetheine is transferred from CoA to a specific serine of apo-ACP by AcpS. This modification is essential for activity because fatty acids are bound in thioester linkage to the sulfhydryl of the prosthetic group.

The protein resides in the cytoplasm. It participates in lipid metabolism; fatty acid biosynthesis. In terms of biological role, carrier of the growing fatty acid chain in fatty acid biosynthesis. In Bartonella henselae (strain ATCC 49882 / DSM 28221 / CCUG 30454 / Houston 1) (Rochalimaea henselae), this protein is Acyl carrier protein.